The chain runs to 670 residues: DNA ligase (670 aa).

Residues 32-36 (DAEYD), 81-82 (SL), and Glu-110 contribute to the NAD(+) site. The N6-AMP-lysine intermediate role is filled by Lys-112. Residues Arg-133, Glu-170, Lys-289, and Lys-313 each coordinate NAD(+). Residues Cys-407, Cys-410, Cys-425, and Cys-431 each coordinate Zn(2+). One can recognise a BRCT domain in the interval 590-670 (ESQLSLKGQT…ALMDLLNAAN (81 aa)).

The protein belongs to the NAD-dependent DNA ligase family. LigA subfamily. Mg(2+) is required as a cofactor. The cofactor is Mn(2+).

The enzyme catalyses NAD(+) + (deoxyribonucleotide)n-3'-hydroxyl + 5'-phospho-(deoxyribonucleotide)m = (deoxyribonucleotide)n+m + AMP + beta-nicotinamide D-nucleotide.. DNA ligase that catalyzes the formation of phosphodiester linkages between 5'-phosphoryl and 3'-hydroxyl groups in double-stranded DNA using NAD as a coenzyme and as the energy source for the reaction. It is essential for DNA replication and repair of damaged DNA. The chain is DNA ligase from Shewanella frigidimarina (strain NCIMB 400).